We begin with the raw amino-acid sequence, 53 residues long: Mannose/glucose-specific lectin alpha chain (53 aa).

It belongs to the leguminous lectin family. Heterodimer of an alpha and a beta chain.

Its function is as follows. This lectin specifically binds mannose and glucose. The protein is Mannose/glucose-specific lectin alpha chain of Vicia cracca (Bird vetch).